A 667-amino-acid chain; its full sequence is NADPH--cytochrome P450 reductase (667 aa).

The Lumenal segment spans residues 1-8; it reads MEILESID. The chain crosses the membrane as a helical span at residues 9 to 29; sequence FIEVLILDNLGAIIIVAVIVG. Over 30-667 the chain is Cytoplasmic; the sequence is TYLYMNKPPP…HGRYLQDVWF (638 aa). Residues 72–215 form the Flavodoxin-like domain; that stretch reads MKIFFGTQTR…DFNRWKKDMW (144 aa). FMN is bound by residues 164–173 and aspartate 199; that span reads LGNKTYEHYN. The FAD-binding FR-type domain occupies 277–511; sequence KNPYYAEVLE…FVRESHFKLP (235 aa). NADP(+) is bound at residue arginine 297. FAD is bound by residues 468–470 and 484–487; these read TSV and GVAS. Residues threonine 527, 586 to 587, and 592 to 596 contribute to the NADP(+) site; these read SR and KVYVQ. FAD is bound at residue tryptophan 666.

It belongs to the NADPH--cytochrome P450 reductase family. In the N-terminal section; belongs to the flavodoxin family. This sequence in the C-terminal section; belongs to the flavoprotein pyridine nucleotide cytochrome reductase family. The cofactor is FAD. Requires FMN as cofactor.

It localises to the endoplasmic reticulum membrane. It catalyses the reaction 2 oxidized [cytochrome P450] + NADPH = 2 reduced [cytochrome P450] + NADP(+) + H(+). Functionally, this enzyme is required for electron transfer from NADP to cytochrome P450 in microsomes. It can also provide electron transfer to heme oxygenase and cytochrome B5. The chain is NADPH--cytochrome P450 reductase (redB) from Dictyostelium discoideum (Social amoeba).